A 151-amino-acid polypeptide reads, in one-letter code: Large ribosomal subunit protein bL9 (151 aa).

The protein belongs to the bacterial ribosomal protein bL9 family.

In terms of biological role, binds to the 23S rRNA. The sequence is that of Large ribosomal subunit protein bL9 from Lactobacillus acidophilus (strain ATCC 700396 / NCK56 / N2 / NCFM).